Here is an 846-residue protein sequence, read N- to C-terminus: Vinculin (846 aa).

An interaction with TLN region spans residues 1 to 257; the sequence is MPVKFHTKTL…VLQLTTTFEE (257 aa). Residues 315–370 are a coiled coil; it reads RAKLLAAADELDQILKELEELQAKGLGDSRQARALAHAAAVKLQELEQEIRKALAE. Residues 617-646 are disordered; that stretch reads WVPPRPPLPELEEEEEPPELPPPPEDPASL.

Belongs to the vinculin/alpha-catenin family. Monomer. Interacts with TLN (talin); the interaction facilitates VIN1 binding to F-actin. As to expression, expressed in epithelial tissues, specifically the pinacoderm (outer epithelium) and choanoderm (feeding epithelium) (at protein level). Also detected in migratory cells of the mesohyl (at protein level).

The protein localises to the cytoplasm. The protein resides in the cell cortex. Its subcellular location is the cell projection. It is found in the filopodium. It localises to the cytoskeleton. Functionally, actin filament (F-actin)-binding protein which may play a role in cell-cell adhesion. The polypeptide is Vinculin (Oscarella pearsei (Sponge)).